A 275-amino-acid polypeptide reads, in one-letter code: Shikimate dehydrogenase (NADP(+)) (275 aa).

Shikimate is bound by residues 19 to 21 (SKS) and Thr-66. Catalysis depends on Lys-70, which acts as the Proton acceptor. Residue Glu-82 coordinates NADP(+). The shikimate site is built by Asn-91 and Asp-106. NADP(+) is bound by residues 130 to 134 (GAGGA), 154 to 159 (NRTASK), and Met-217. Tyr-219 contributes to the shikimate binding site. Position 241 (Gly-241) interacts with NADP(+).

The protein belongs to the shikimate dehydrogenase family. In terms of assembly, homodimer.

It carries out the reaction shikimate + NADP(+) = 3-dehydroshikimate + NADPH + H(+). Its pathway is metabolic intermediate biosynthesis; chorismate biosynthesis; chorismate from D-erythrose 4-phosphate and phosphoenolpyruvate: step 4/7. Functionally, involved in the biosynthesis of the chorismate, which leads to the biosynthesis of aromatic amino acids. Catalyzes the reversible NADPH linked reduction of 3-dehydroshikimate (DHSA) to yield shikimate (SA). The sequence is that of Shikimate dehydrogenase (NADP(+)) from Colwellia psychrerythraea (strain 34H / ATCC BAA-681) (Vibrio psychroerythus).